The following is an 89-amino-acid chain: Small ribosomal subunit protein uS17 (89 aa).

The protein belongs to the universal ribosomal protein uS17 family. In terms of assembly, part of the 30S ribosomal subunit.

Its function is as follows. One of the primary rRNA binding proteins, it binds specifically to the 5'-end of 16S ribosomal RNA. The polypeptide is Small ribosomal subunit protein uS17 (Baumannia cicadellinicola subsp. Homalodisca coagulata).